The chain runs to 443 residues: tRNA modification GTPase MnmE (443 aa).

Residues Arg-19, Glu-78, and Lys-118 each contribute to the (6S)-5-formyl-5,6,7,8-tetrahydrofolate site. Residues 214 to 366 enclose the TrmE-type G domain; it reads GFKIAIIGPT…LISKIKNKLK (153 aa). Asn-224 serves as a coordination point for K(+). GTP is bound by residues 224-229, 243-249, and 268-271; these read NAGKSS, SEIAGTT, and DTAG. Ser-228 serves as a coordination point for Mg(2+). Positions 243, 245, and 248 each coordinate K(+). Mg(2+) is bound at residue Thr-249. Residue Lys-443 participates in (6S)-5-formyl-5,6,7,8-tetrahydrofolate binding.

It belongs to the TRAFAC class TrmE-Era-EngA-EngB-Septin-like GTPase superfamily. TrmE GTPase family. As to quaternary structure, homodimer. Heterotetramer of two MnmE and two MnmG subunits. It depends on K(+) as a cofactor.

It is found in the cytoplasm. Its function is as follows. Exhibits a very high intrinsic GTPase hydrolysis rate. Involved in the addition of a carboxymethylaminomethyl (cmnm) group at the wobble position (U34) of certain tRNAs, forming tRNA-cmnm(5)s(2)U34. This Pelagibacter ubique (strain HTCC1062) protein is tRNA modification GTPase MnmE.